The sequence spans 296 residues: MSAKIISGTEIRKEILGEIKDAVTEMKDKYGTVPGLVTILVGESPASMSYVSLKIKTALSLGFYEVQESLSVETTEAELLALIEKYNNDDSIHGVLVQLPLPKHINEQNIITAIDPDKDVDAFHPVNIGRLMIGGDDVKFLPCTPAGIQEMLVRSGVETAGAEVVVVGRSNIVGKPIAMMMAQKGIGANATVTIVHTGSRDLATHCRRADILIVAAGVPNLVKPEWIKPGATVIDVGVNRVGTNSETGKAILRGDVDFEAVKEIAGKITPVPGGVGPMTIAMLMKNTLASALAHSS.

Residues 168–170 (GRS), Thr197, and Val238 each bind NADP(+).

This sequence belongs to the tetrahydrofolate dehydrogenase/cyclohydrolase family. Homodimer.

The catalysed reaction is (6R)-5,10-methylene-5,6,7,8-tetrahydrofolate + NADP(+) = (6R)-5,10-methenyltetrahydrofolate + NADPH. It carries out the reaction (6R)-5,10-methenyltetrahydrofolate + H2O = (6R)-10-formyltetrahydrofolate + H(+). Its pathway is one-carbon metabolism; tetrahydrofolate interconversion. Catalyzes the oxidation of 5,10-methylenetetrahydrofolate to 5,10-methenyltetrahydrofolate and then the hydrolysis of 5,10-methenyltetrahydrofolate to 10-formyltetrahydrofolate. This is Bifunctional protein FolD from Desulfotalea psychrophila (strain LSv54 / DSM 12343).